A 109-amino-acid chain; its full sequence is Putative double-stranded DNA mimic protein YciU (109 aa).

The protein belongs to the putative dsDNA mimic protein family.

Its function is as follows. May act as a double-stranded DNA (dsDNA) mimic. Probably regulates the activity of a dsDNA-binding protein. In Salmonella paratyphi B (strain ATCC BAA-1250 / SPB7), this protein is Putative double-stranded DNA mimic protein YciU.